The chain runs to 178 residues: Cytochrome b6-f complex iron-sulfur subunit (178 aa).

Residues 20–42 (LLTFGSVTGVALGALYPVANYFI) traverse the membrane as a helical segment. The Rieske domain occupies 65–161 (ASGWLSSHPE…VSVENDNVFV (97 aa)). The [2Fe-2S] cluster site is built by Cys107, His109, Cys125, and His128. A disulfide bridge connects residues Cys112 and Cys127.

This sequence belongs to the Rieske iron-sulfur protein family. As to quaternary structure, the 4 large subunits of the cytochrome b6-f complex are cytochrome b6, subunit IV (17 kDa polypeptide, PetD), cytochrome f and the Rieske protein, while the 4 small subunits are PetG, PetL, PetM and PetN. The complex functions as a dimer. [2Fe-2S] cluster is required as a cofactor.

The protein resides in the cellular thylakoid membrane. It catalyses the reaction 2 oxidized [plastocyanin] + a plastoquinol + 2 H(+)(in) = 2 reduced [plastocyanin] + a plastoquinone + 4 H(+)(out). Its function is as follows. Component of the cytochrome b6-f complex, which mediates electron transfer between photosystem II (PSII) and photosystem I (PSI), cyclic electron flow around PSI, and state transitions. The chain is Cytochrome b6-f complex iron-sulfur subunit from Synechococcus sp. (strain CC9605).